The following is a 282-amino-acid chain: Putative 1-acyl-sn-glycerol-3-phosphate acyltransferase acl-2 (282 aa).

2 helical membrane-spanning segments follow: residues 4–24 (FWSI…NIST) and 32–52 (ISFY…TMIP). Residues 98–103 (HQSSLD) carry the HXXXXD motif motif. The chain crosses the membrane as a helical span at residues 122–142 (ILAYVPFFNLGAYFSNTIFID).

It belongs to the 1-acyl-sn-glycerol-3-phosphate acyltransferase family.

It localises to the membrane. It catalyses the reaction a 1-acyl-sn-glycero-3-phosphate + an acyl-CoA = a 1,2-diacyl-sn-glycero-3-phosphate + CoA. It functions in the pathway phospholipid metabolism; CDP-diacylglycerol biosynthesis; CDP-diacylglycerol from sn-glycerol 3-phosphate: step 2/3. In terms of biological role, converts lysophosphatidic acid (LPA) into phosphatidic acid by incorporating an acyl moiety at the sn-2 position of the glycerol backbone. This Caenorhabditis elegans protein is Putative 1-acyl-sn-glycerol-3-phosphate acyltransferase acl-2 (acl-2).